A 489-amino-acid polypeptide reads, in one-letter code: UDP-N-acetylmuramoyl-L-alanyl-D-glutamate--2,6-diaminopimelate ligase (489 aa).

Position 30 (Ser30) interacts with UDP-N-acetyl-alpha-D-muramoyl-L-alanyl-D-glutamate. 108–114 (GTNGKTT) contacts ATP. Residues Asn149, 150–151 (TT), Ser177, Gln183, and Arg185 each bind UDP-N-acetyl-alpha-D-muramoyl-L-alanyl-D-glutamate. At Lys217 the chain carries N6-carboxylysine. Meso-2,6-diaminopimelate contacts are provided by residues Arg383, 407–410 (DNPR), Gly459, and Glu463. The Meso-diaminopimelate recognition motif motif lies at 407–410 (DNPR).

The protein belongs to the MurCDEF family. MurE subfamily. Mg(2+) serves as cofactor. Carboxylation is probably crucial for Mg(2+) binding and, consequently, for the gamma-phosphate positioning of ATP.

It is found in the cytoplasm. The catalysed reaction is UDP-N-acetyl-alpha-D-muramoyl-L-alanyl-D-glutamate + meso-2,6-diaminopimelate + ATP = UDP-N-acetyl-alpha-D-muramoyl-L-alanyl-gamma-D-glutamyl-meso-2,6-diaminopimelate + ADP + phosphate + H(+). The protein operates within cell wall biogenesis; peptidoglycan biosynthesis. In terms of biological role, catalyzes the addition of meso-diaminopimelic acid to the nucleotide precursor UDP-N-acetylmuramoyl-L-alanyl-D-glutamate (UMAG) in the biosynthesis of bacterial cell-wall peptidoglycan. In Geobacillus kaustophilus (strain HTA426), this protein is UDP-N-acetylmuramoyl-L-alanyl-D-glutamate--2,6-diaminopimelate ligase.